Here is a 1361-residue protein sequence, read N- to C-terminus: Xanthine dehydrogenase 1 (1361 aa).

A 2Fe-2S ferredoxin-type domain is found at 15–101; that stretch reads TEALLYVNGV…GMHVISIEGL (87 aa). [2Fe-2S] cluster contacts are provided by Cys53, Cys58, Cys61, Cys83, Cys123, Cys126, Cys159, and Cys161. Positions 257–442 constitute an FAD-binding PCMH-type domain; sequence RGNGGITWYR…LSVFLPWTRP (186 aa). FAD is bound by residues 285-292, Phe365, 375-379, Asp388, Leu432, and Lys450; these read LLVGNTEV and CIGGN. Mo-molybdopterin-binding residues include Gln796 and Phe827. Glu831 and Arg909 together coordinate substrate. Arg941 serves as a coordination point for Mo-molybdopterin. Substrate is bound by residues Phe943 and Thr1039. A Mo-molybdopterin-binding site is contributed by Ala1108. Glu1297 (proton acceptor) is an active-site residue.

It belongs to the xanthine dehydrogenase family. In terms of assembly, homodimer. [2Fe-2S] cluster serves as cofactor. It depends on FAD as a cofactor. Requires Mo-molybdopterin as cofactor. In terms of tissue distribution, expressed in roots, leaves, stems, flowers and siliques.

The catalysed reaction is xanthine + NAD(+) + H2O = urate + NADH + H(+). It catalyses the reaction hypoxanthine + NAD(+) + H2O = xanthine + NADH + H(+). Its function is as follows. Key enzyme involved in purine catabolism. Catalyzes the oxidation of hypoxanthine to xanthine and the oxidation of xanthine to urate. Regulates the level of ureides and plays an important role during plant growth and development, senescence and response to stresses. Possesses NADH oxidase activity and may contribute to the generation of superoxide anions in planta. The sequence is that of Xanthine dehydrogenase 1 (XDH1) from Arabidopsis thaliana (Mouse-ear cress).